The primary structure comprises 551 residues: MDAAATAATATAAAAMVWFRKGLRVHDNPALDAARRGGAAARLYPVFVLDPRYLRPDQAAPSPGSARAGVARVRFLLESLSDLDARLRRLGSRLLLLRARDDGDVAGTVCAALKDWNIGKLCFESDTEPYALARDKKVMDFAAASGIDVFSPVSHTLFDPAEIIEKNGGRPPMTYQSFVAIAGEPPEPIMEEYSELPPVGDTGEYELLPVPRVEELGYGDISQEDLSLFRGGETEALKRMRESLHDKEWVAKFEKPKGDPSAFLKPATTVLSPYLKFGCLSSRYFYHCIQDIYRSTKKHTNPPVSLTGQLLWRDFFYTVAFGTPNFDQMKGNKICKQIPWTENEELFPAWRDGRTGYPWIDAIMIQLRKWGWMHHLARHSVACFLTRGDLFIHWEKGRDVFERLLIDSDWAINNGNWMWLSCSSFFYQYHRIYSPTSFGKKYDPNGNYIRHFIPVLKDMPKEYIYEPWTAPLSIQKKANCIIGKDYPKPVVDHAIASKECKKMMGEAYASNRLDDDKPDKGKSSNSSRRKLSAGSQVTPNSSKTKQLKRSS.

The Photolyase/cryptochrome alpha/beta domain occupies 13-157 (AAAMVWFRKG…DVFSPVSHTL (145 aa)). Glu254 serves as a coordination point for phosphate. Residues Lys255, 268–272 (TTVLS), 309–313 (QLLWR), 372–375 (WMHH), Arg378, 407–409 (DSD), and Asn413 contribute to the FAD site. Trp312 contacts DNA. The interaction with DNA stretch occupies residues 374–379 (HHLARH). Trp419 lines the DNA pocket. The tract at residues 508–551 (YASNRLDDDKPDKGKSSNSSRRKLSAGSQVTPNSSKTKQLKRSS) is disordered. The span at 512-522 (RLDDDKPDKGK) shows a compositional bias: basic and acidic residues. Polar residues predominate over residues 533–544 (AGSQVTPNSSKT).

It belongs to the DNA photolyase class-1 family. Requires FAD as cofactor.

It carries out the reaction (6-4) photoproduct (in DNA) = 2 pyrimidine residues (in DNA).. In terms of biological role, involved in repair of UV radiation-induced DNA damage. Catalyzes the photoreactivation of pyrimidine [6-4] pyrimidone photoproduct (6-4 products). The sequence is that of (6-4)DNA photolyase (UVR3) from Oryza sativa subsp. japonica (Rice).